Here is an 875-residue protein sequence, read N- to C-terminus: DNA mismatch repair protein MutS (875 aa).

Residue 626–633 (GPNMAGKS) participates in ATP binding. Residues 830 to 855 (RAAPPPPAPAAPKTSPVEERLREIQP) are disordered. Over residues 845–855 (PVEERLREIQP) the composition is skewed to basic and acidic residues.

This sequence belongs to the DNA mismatch repair MutS family.

Functionally, this protein is involved in the repair of mismatches in DNA. It is possible that it carries out the mismatch recognition step. This protein has a weak ATPase activity. In Cereibacter sphaeroides (strain ATCC 17023 / DSM 158 / JCM 6121 / CCUG 31486 / LMG 2827 / NBRC 12203 / NCIMB 8253 / ATH 2.4.1.) (Rhodobacter sphaeroides), this protein is DNA mismatch repair protein MutS.